Here is a 184-residue protein sequence, read N- to C-terminus: Dual specificity protein phosphatase 22 (184 aa).

Residue Gly-2 is the site of N-myristoyl glycine attachment. Residues 4 to 144 form the Tyrosine-protein phosphatase domain; the sequence is GMNKILPGLY…LQEFEKHEVH (141 aa). Ser-58 is modified (phosphoserine). Catalysis depends on Cys-88, which acts as the Phosphocysteine intermediate. A protein is bound by residues Leu-89, Ala-90, Val-92, Ser-93, and Arg-94.

The protein belongs to the protein-tyrosine phosphatase family. Non-receptor class dual specificity subfamily. In terms of assembly, monomer. Interacts with LCK; the interaction is direct. Interacts with UBR2; the interaction is direct. Post-translationally, myristoylation regulates subcellular location, and is necessary for activation of JNK. Ubiquitous. Highest expression seen in heart, placenta, lung, liver, kidney and pancreas.

The protein resides in the cytoplasm. The enzyme catalyses O-phospho-L-tyrosyl-[protein] + H2O = L-tyrosyl-[protein] + phosphate. It catalyses the reaction O-phospho-L-seryl-[protein] + H2O = L-seryl-[protein] + phosphate. It carries out the reaction O-phospho-L-threonyl-[protein] + H2O = L-threonyl-[protein] + phosphate. Dual specificity phosphatase; can dephosphorylate both phosphotyrosine and phosphoserine or phosphothreonine residues. Activates the JNK signaling pathway. Inhibits T-cell receptor signaling and T-cell mediated immune responses, acting, at least in part, by inducing degradation of E3 ubiquitin ligase UBR2. Dephosphorylates and thereby induces 'Lys-48'-linked ubiquitination of UBR2, leading to proteasomal degradation of UBR2. Dephosphorylates and thereby inactivates tyrosine kinase LCK. Inhibits UBR2-mediated 'Lys-63'-linked ubiquitination of LCK. May play a role in B-cell receptor (BCR) signaling and B-cell function. The chain is Dual specificity protein phosphatase 22 (DUSP22) from Homo sapiens (Human).